The chain runs to 477 residues: Bifunctional protein HldE (477 aa).

A ribokinase region spans residues 1 to 318; the sequence is MKVTLPEFER…ENAVRGRADT (318 aa). Position 179 is an N6-acetyllysine (Lys-179). Residue 195–198 participates in ATP binding; the sequence is NLSE. The active site involves Asp-264. Positions 344 to 477 are cytidylyltransferase; the sequence is MTNGVFDILH…IKKIQQDKKG (134 aa).

It in the N-terminal section; belongs to the carbohydrate kinase PfkB family. In the C-terminal section; belongs to the cytidylyltransferase family. Homodimer.

The catalysed reaction is D-glycero-beta-D-manno-heptose 7-phosphate + ATP = D-glycero-beta-D-manno-heptose 1,7-bisphosphate + ADP + H(+). The enzyme catalyses D-glycero-beta-D-manno-heptose 1-phosphate + ATP + H(+) = ADP-D-glycero-beta-D-manno-heptose + diphosphate. It participates in nucleotide-sugar biosynthesis; ADP-L-glycero-beta-D-manno-heptose biosynthesis; ADP-L-glycero-beta-D-manno-heptose from D-glycero-beta-D-manno-heptose 7-phosphate: step 1/4. The protein operates within nucleotide-sugar biosynthesis; ADP-L-glycero-beta-D-manno-heptose biosynthesis; ADP-L-glycero-beta-D-manno-heptose from D-glycero-beta-D-manno-heptose 7-phosphate: step 3/4. In terms of biological role, catalyzes the phosphorylation of D-glycero-D-manno-heptose 7-phosphate at the C-1 position to selectively form D-glycero-beta-D-manno-heptose-1,7-bisphosphate. Functionally, catalyzes the ADP transfer from ATP to D-glycero-beta-D-manno-heptose 1-phosphate, yielding ADP-D-glycero-beta-D-manno-heptose. The chain is Bifunctional protein HldE from Escherichia coli O9:H4 (strain HS).